A 505-amino-acid chain; its full sequence is ATP synthase subunit alpha, chloroplastic (505 aa).

170-177 (GDRQTGKT) provides a ligand contact to ATP.

Belongs to the ATPase alpha/beta chains family. As to quaternary structure, F-type ATPases have 2 components, CF(1) - the catalytic core - and CF(0) - the membrane proton channel. CF(1) has five subunits: alpha(3), beta(3), gamma(1), delta(1), epsilon(1). CF(0) has four main subunits: a, b, b' and c.

The protein resides in the plastid. It localises to the chloroplast thylakoid membrane. The enzyme catalyses ATP + H2O + 4 H(+)(in) = ADP + phosphate + 5 H(+)(out). Functionally, produces ATP from ADP in the presence of a proton gradient across the membrane. The alpha chain is a regulatory subunit. This chain is ATP synthase subunit alpha, chloroplastic, found in Mesostigma viride (Green alga).